A 304-amino-acid chain; its full sequence is Porphobilinogen deaminase (304 aa).

S-(dipyrrolylmethanemethyl)cysteine is present on Cys240.

This sequence belongs to the HMBS family. As to quaternary structure, monomer. Requires dipyrromethane as cofactor.

It catalyses the reaction 4 porphobilinogen + H2O = hydroxymethylbilane + 4 NH4(+). It participates in porphyrin-containing compound metabolism; protoporphyrin-IX biosynthesis; coproporphyrinogen-III from 5-aminolevulinate: step 2/4. In terms of biological role, tetrapolymerization of the monopyrrole PBG into the hydroxymethylbilane pre-uroporphyrinogen in several discrete steps. The sequence is that of Porphobilinogen deaminase from Xanthomonas axonopodis pv. citri (strain 306).